The chain runs to 309 residues: Tagatose-6-phosphate kinase (309 aa).

It belongs to the carbohydrate kinase PfkB family. LacC subfamily.

The catalysed reaction is D-tagatofuranose 6-phosphate + ATP = D-tagatofuranose 1,6-bisphosphate + ADP + H(+). It functions in the pathway carbohydrate metabolism; D-tagatose 6-phosphate degradation; D-glyceraldehyde 3-phosphate and glycerone phosphate from D-tagatose 6-phosphate: step 1/2. The sequence is that of Tagatose-6-phosphate kinase from Streptococcus pneumoniae (strain P1031).